We begin with the raw amino-acid sequence, 2717 residues long: MSQPTSVPKLLLHHAVESRDKVAFLGPGWSITYSDLEKRTRLVAAHLARAGIGRGDFVAIVLGRCLEAVESVLAIMRAGAVSVPLDPRSPPADLARVLEHSGARAIITDDRHLATVSAAAVKGSLIIISTTNAQVDVIESLKTERYQDWVEDDGYSTSDVHLDSLGDEEEAFLHYTSGTTSLPKGVLSSQKSALWNVEKVTSVFEFSSEDRFFWPLPLFHILGHSLCILATVAKGASAYLSDPDQLLLDNLLVKDVEDTTFIAGAPATFHELVEAKAASSSTLSLPKLRACMSAGAAASVSLCDQVHELFGVSLLNNYGCTETCGAIAISRPGHVYRQHGSVTPLPDWEIQLMDQDGKQVREGEQGELWVRGPGLMLGYYKETQSPFTEDAWFPTGDTGILTTSDVGKELSLVGRKKELIIRGGENIQPAELEQVLLQHPGVADVAVSGILHGLLGETPAAFIVKETPDLDLDLSSLIATCREALPDYKVPTAFYEIDAVPRTLLGKPKRLAVASYTSKPLTVRSRLQTRAAVEALVLAETAGACGVQAEPGEKESDPDWLRKYADESFSHLGLTSMAGVVLRDRLANLTGLVDLPNTLVFDYSTPAAVRDYLFNRLREQESPLPSKSAPALSLPSKAEPIAIISMACRYPGGISSPEDLWQLVSDEIDATTDFPSDRGWDIDSLYSTDPTEPFTSTTKRGGFLPDFADFDAGLFGMAPREALATDPQQRLLLETTWELAERGGIAPLSLKGTQTGCFIGTLYDDYEANGFGNAELEAHLGLGSSGSVMSGRISYYFGLHGPSIVISTGCSSSLCAVHSAAQALRNEECTLAIAGGITCMASPRPFTMFSKRRGLSADGRCRTYSSDAAGTGWSEGVGLIMLEKLSDAQRNGHRVLGVIRGSAVNSDGTSNGLTAPSGPAQQMCIQSALSQAALSPTDIDVLEGHGTATPLGDPIEVQAVINTYGNGSGNDPRANPLLIGSIKSNIGHTQAAAAVAGIIKMVKSIHHGVAPASLHIREPSRHIDWDGCGVEPLSKAKQWPSVDRARRAAVSSFGIGGTNAHIILEQPDSIEQNGVSTPKNHTIAFPWIISGADENALRAQAQSLLAAWRKSLSHESPSDIAFSLATARSSLKYRAVVTYTAGGDLNDQIETALTALAEDESHPDVVTGHTNTTGNKPRLACLFSGQGSRMPDPSAIEELSTVFPIFSRAFKEACEEVNQYLECPLERALSDSSLLDRTDFAQPALFVFEVAMYRLLESFDVIPDVVSGHSLGEIAAAHISGALTLRDAAIIVTTRSRLMAALDANGGMVSIAAPEQEVAEELSRLGSTAIIAVVNSEKSVVVSGTREAITAVADRFTELGRRTTILRNVNHGFHSPMMNGILGDLEEALASSIGSGTSSKIPLVSTVTGKLAEAAQLTSPQYWTRHVSEPVRFADSVNELRSNERVSVFIEVGPSAVLSPHVPGTVATYGTVGKLLNTLGQIWARGVPVNWQAVFGGVGAHLVDLPVYAFQRRKYWLPYRTLLPAESVGASGASSPGRTSDIGTSTLNHGVLYRTTSIAGTNDIICAGFVSASKQPWLRDHIISGQSLVPATAFAELALRAGRECADPSGSEQVILDELIILAPLALSLEEDDEEQEFEVQVVIKELEDEESTIRRSIDVYSRLHAVSTQPDWVQHATGTLKLISLPPPEKDVFTNGTHDVENSEVDVSKAYAMLEDFGISYGPAFQGVRGGWRQHDNELLVQINPPQDQDSKAGFVLHPALLDAALHAPILAAPEKVSSGQIRLPFSFKGIQVFEAATSTSGPVLARIRDLDDERFSVTITNKATGAAVAEISEVMLRAVQPPVVEGDLYRLKWTELKAAQTTKPNLVDDIFTVQAPRNVDAADIPKAVHNAVSEALRAIQQWRTKKANSSDKIRLIFVTEQASLHPDVNVIDAAVWGFVRSAQTEFGGENIILIDLDGSAESQEALPSAFDCGQEVVALQDGKIMVPTLSKEPPVPSTSTTLDVSGTVLITGGTGGLGAILSRHLVQTCGARNLLLTSRSGIKAAGATELLDELSAQDATVVRIESCDISDRAQLATLLEGNHGHPPITAIIHCAGVVDDGVLTSLTPERISRVLQAKVDAAWNLHQLAPETTRTFVLYSSFVGIVGNEGQAAYTAGNAFLNALARMRVAQGLPAVSLAWGPWANDVGMAAGDKLVIPNLRIASAQPVVDQQGLHLFDRALQTSEPVLVPLLLRGPFPMVPSAAAVTKSKKATAKGKAKTGAAWRKKLAAVSPESRSDTLLGLVRDEIAAVLGYQGQELPDGPLSDLGFDSFTSVTVSNRMRVLTGFRDLPVTLALDYDTPQALVQYLLDRINAEPETEIELDQDVAEEETVSGTNGHQNGHQNGTQNGHSNGHANGASTNGDATDGIDPEEFRGLSTLHRRLCRLEQYTAAADLLASAALAMPTFPSNGRKLLDYVADPHRLATGPEVSPGNDAPLPVVFIAPFFPRIKIGGISLSVYSAVAASLNGKRDVFELPHPEGQYVPEDLDTLAELHVSTIEQQFGDRPGIILAGYSAGGTVAYAVASKLAQAGKHPRLAGFVLVDTYLTMTGRGDPDWLNALPAEALVSRLGGPDSTGESLVGDLDLALAKVGGYFRTLRDWDQELYPLPDALSTLFVRALDPSEKMPKNADIWRPRWQRANHTVEVPGSHLALLDKRYAPAIAVEIEHWAKEQLGV.

The segment at 13-422 (HHAVESRDKV…VGRKKELIIR (410 aa)) is adenylation (A) domain. The region spanning 531–617 (AAVEALVLAE…AVRDYLFNRL (87 aa)) is the Carrier 1 domain. An O-(pantetheine 4'-phosphoryl)serine modification is found at serine 576. In terms of domain architecture, Ketosynthase family 3 (KS3) spans 638–1066 (AEPIAIISMA…GTNAHIILEQ (429 aa)). Catalysis depends on for beta-ketoacyl synthase activity residues cysteine 810, histidine 945, and histidine 988. A Malonyl-CoA:ACP transacylase (MAT) domain is found at 1204–1462 (PIFSRAFKEA…GPSAVLSPHV (259 aa)). The N-terminal hotdog fold stretch occupies residues 1549–1688 (HGVLYRTTSI…GTLKLISLPP (140 aa)). The PKS/mFAS DH domain occupies 1549–1847 (HGVLYRTTSI…LRAVQPPVVE (299 aa)). The interval 1561–1842 (TNDIICAGFV…ISEVMLRAVQ (282 aa)) is dehydratase (DH) domain. The active-site Proton acceptor; for dehydratase activity is the histidine 1581. Positions 1703 to 1847 (NSEVDVSKAY…LRAVQPPVVE (145 aa)) are C-terminal hotdog fold. The Proton donor; for dehydratase activity role is filled by aspartate 1764. Residues 2008–2186 (GTVLITGGTG…AVSLAWGPWA (179 aa)) form the Ketoreductase (KR) domain. One can recognise a Carrier 2 domain in the interval 2277 to 2354 (SRSDTLLGLV…ALVQYLLDRI (78 aa)). At serine 2313 the chain carries O-(pantetheine 4'-phosphoryl)serine. Residues 2361–2373 (EIELDQDVAEEET) are compositionally biased toward acidic residues. Residues 2361–2412 (EIELDQDVAEEETVSGTNGHQNGHQNGTQNGHSNGHANGASTNGDATDGIDP) are disordered. The span at 2375 to 2396 (SGTNGHQNGHQNGTQNGHSNGH) shows a compositional bias: low complexity. Positions 2497 to 2711 (SLSVYSAVAA…AIAVEIEHWA (215 aa)) are thioester reductase (TE) domain.

It in the N-terminal section; belongs to the NRP synthetase family. Pantetheine 4'-phosphate is required as a cofactor.

Its function is as follows. PKS-NRPS hybrid synthetase that, alone, is sufficient to produce naringenin chalcone, the direct precursor of naringenin, by using p-coumaric acid (p-CA) or p-hydroxybenzoic acid (p-HBA) with the involvement of malonyl-CoA molecules. The adenylation (A) domain activates p-CA or p-HBA as adenylates, which are transferred to the thiol group of the pantetheinyl residue of the T domain, and further transferred to the adjacent PKS portion of fnsA. Besides p-CA and p-HBA, the A domain is also able to activate other substrates such as cinnamic acid and salicyclic acid. Within the PKS portion of fnsA, p-CA and p-HBA act as starter units for respectively three or four malonyl-CoA molecules for elongation by the AT and KS domains of fnsA. Afterwards, naringenin chalcone is cyclized through Claisen condensation and thereby released either spontaneously or catalyzed by the TE domain. Finally, naringenin chalcone is converted to naringenin spontaneously or by a chalcone isomerase. In Pestalotiopsis fici (strain W106-1 / CGMCC3.15140), this protein is Naringenin synthase.